Consider the following 283-residue polypeptide: NAD kinase (283 aa).

The active-site Proton acceptor is the Asp67. NAD(+)-binding positions include Asp67–Gly68, Asn141–Asp142, Arg152, Asp171, Thr182–Ser187, and Gln241.

The protein belongs to the NAD kinase family. A divalent metal cation serves as cofactor.

Its subcellular location is the cytoplasm. It catalyses the reaction NAD(+) + ATP = ADP + NADP(+) + H(+). Involved in the regulation of the intracellular balance of NAD and NADP, and is a key enzyme in the biosynthesis of NADP. Catalyzes specifically the phosphorylation on 2'-hydroxyl of the adenosine moiety of NAD to yield NADP. In Heliobacterium modesticaldum (strain ATCC 51547 / Ice1), this protein is NAD kinase.